Reading from the N-terminus, the 250-residue chain is Prolactin-7A2 (250 aa).

The signal sequence occupies residues 1–29; it reads MQLSFSRPRPWTLLLMVVSNLLLWENVSS. Residues Asn-26, Asn-35, Asn-102, and Asn-134 are each glycosylated (N-linked (GlcNAc...) asparagine). 2 cysteine pairs are disulfide-bonded: Cys-100/Cys-215 and Cys-232/Cys-241.

This sequence belongs to the somatotropin/prolactin family. Expression restricted to placental tissues. Trophoblast giant cells are found to be the major source.

The protein resides in the secreted. The polypeptide is Prolactin-7A2 (Prl7a2) (Rattus norvegicus (Rat)).